A 117-amino-acid chain; its full sequence is UPF0102 protein FTF0898c (117 aa).

Belongs to the UPF0102 family.

This Francisella tularensis subsp. tularensis (strain FSC 198) protein is UPF0102 protein FTF0898c.